The following is a 192-amino-acid chain: Vascular endothelial growth factor A (192 aa).

A signal peptide spans 1-26 (MNFLLSWIHWGLAALLYFHNAKVLQA). Disulfide bonds link Cys52-Cys94, Cys83-Cys128, and Cys87-Cys130. Asn101 carries N-linked (GlcNAc...) asparagine glycosylation.

This sequence belongs to the PDGF/VEGF growth factor family. In terms of assembly, homodimer; disulfide-linked. Also found as heterodimer with PGF Interacts with FLT1/VEGFR1 and KDR/VEGFR2 receptors, heparan sulfate and heparin. In terms of tissue distribution, expressed by the venom gland, and probably other tissues.

It is found in the secreted. Functionally, growth factor active in angiogenesis, vasculogenesis and endothelial cell growth. Induces endothelial cell proliferation, promotes cell migration, inhibits apoptosis and induces permeabilization of blood vessels. This is Vascular endothelial growth factor A from Vipera ammodytes ammodytes (Western sand viper).